Consider the following 858-residue polypeptide: Elongation factor 2 (858 aa).

Positions 17-362 constitute a tr-type G domain; the sequence is ANIRNMSVIA…MITIHLPSPV (346 aa). Residue 26–33 participates in GTP binding; the sequence is AHVDHGKS. Phosphothreonine is present on threonine 54. Threonine 57 is subject to Phosphothreonine; by EEF2K. Position 59 is a phosphothreonine (threonine 59). Lysine 152 carries the N6-succinyllysine modification. GTP-binding positions include 158 to 161 and 216 to 218; these read NKMD and SGL. At lysine 235 the chain carries N6-acetyllysine. Lysine 239 carries the post-translational modification N6-acetyllysine; alternate. Lysine 239 is covalently cross-linked (Glycyl lysine isopeptide (Lys-Gly) (interchain with G-Cter in SUMO1); alternate). Residue tyrosine 265 is modified to Phosphotyrosine; by CSK. At lysine 272 the chain carries N6-acetyllysine; alternate. Lysine 272 carries the post-translational modification N6-succinyllysine; alternate. The residue at position 275 (lysine 275) is an N6-acetyllysine. Lysine 322 participates in a covalent cross-link: Glycyl lysine isopeptide (Lys-Gly) (interchain with G-Cter in SUMO). Serine 325 is modified (phosphoserine). Tyrosine 373 carries the phosphotyrosine; by CSK modification. Threonine 435 carries the post-translational modification Phosphothreonine. An N6-acetyllysine mark is found at lysine 439 and lysine 445. Position 502 is a phosphoserine (serine 502). An N6,N6,N6-trimethyllysine; by EEF2KMT modification is found at lysine 525. Lysine 529 is covalently cross-linked (Glycyl lysine isopeptide (Lys-Gly) (interchain with G-Cter in SUMO)). Lysine 572 carries the post-translational modification N6-succinyllysine. Serine 595 is modified (phosphoserine; by CDK2). Lysine 619 carries the post-translational modification N6-acetyllysine. Residue histidine 715 is modified to Diphthamide.

It belongs to the TRAFAC class translation factor GTPase superfamily. Classic translation factor GTPase family. EF-G/EF-2 subfamily. Binds to 80S ribosomes. Actively translating ribosomes show mutually exclusive binding of eIF5a (EIF5A or EIF5A2) and EEF2/eEF2. Interacts with SERBP1; interaction sequesters EEF2/eEF2 at the A-site of the ribosome, thereby blocking the interaction sites of the mRNA-tRNA complex, promoting ribosome stabilization and hibernation. Interacts with HABP4; interaction takes place at the A-site of hibernating ribosomes and promotes ribosome stabilization. Component of the mRNA surveillance SURF complex, at least composed of ERF1, ERF3 (ERF3A or ERF3B), EEF2, UPF1/RENT1, SMG1, SMG8 and SMG9. Interacts with RBPMS2. Post-translationally, phosphorylation by EF-2 kinase completely inactivates EF-2; it requires prior phosphorylation by CDK2 at Ser-595 during mitotic prometaphase. Phosphorylation by CSK promotes SUMOylation, proteolytic cleavage, and nuclear translocation if the C-terminal fragment. In terms of processing, diphthamide is 2-[3-carboxyamido-3-(trimethyl-ammonio)propyl]histidine. ISGylated. Post-translationally, proteolytically processed at two sites following phosphorylation by CSK. In terms of processing, SUMOylated following phosphorylation by CSK, promotes proteolytic cleavage.

The protein resides in the cytoplasm. Its subcellular location is the nucleus. It catalyses the reaction GTP + H2O = GDP + phosphate + H(+). Functionally, catalyzes the GTP-dependent ribosomal translocation step during translation elongation. During this step, the ribosome changes from the pre-translocational (PRE) to the post-translocational (POST) state as the newly formed A-site-bound peptidyl-tRNA and P-site-bound deacylated tRNA move to the P and E sites, respectively. Catalyzes the coordinated movement of the two tRNA molecules, the mRNA and conformational changes in the ribosome. The chain is Elongation factor 2 (EEF2) from Pongo abelii (Sumatran orangutan).